The sequence spans 321 residues: tRNA 2-thiolation protein NcsA (321 aa).

Lys204 is covalently cross-linked (Glycyl lysine isopeptide (Lys-Gly) (interchain with G-Cter in SAMP2)).

Belongs to the TtcA family. CTU1/NCS6/ATPBD3 subfamily. In terms of assembly, interacts with monomeric and polymeric forms of SAMP2. Interacts with UbaA. Interacts with archaeal EF-1-alpha and Pan1. Non-sampylated protein forms a complex with archaeal CPSF1 of approximately 100 kDa. Sampylated at Lys-204 with the archaeal ubiquitin-like protein SAMP2. Polymeric chains of SAMP2 are also linked.

Its pathway is tRNA modification; 5-methoxycarbonylmethyl-2-thiouridine-tRNA biosynthesis. Required for thiolation of mcm(5)S(2)U at the wobble uridine position of tRNA specific for lysine (tRNA(Lys)). Probably acts by catalyzing adenylation of tRNA, an intermediate required for 2-thiolation. May also act as a sulfurtransferase that transfers sulfur from thiocarboxylated SAMP2 onto the uridine of tRNA at wobble position. Required for cell growth at elevated temperatures. In Haloferax volcanii (strain ATCC 29605 / DSM 3757 / JCM 8879 / NBRC 14742 / NCIMB 2012 / VKM B-1768 / DS2) (Halobacterium volcanii), this protein is tRNA 2-thiolation protein NcsA.